Here is a 499-residue protein sequence, read N- to C-terminus: MLKRDCCCGCKSAEFCTCKNKKSCIPNNLYEKIRNVFGYEVFEKLNNLRPYFDDLHSSTYIGKLDDVWVQIRIPSDSKINYDNETKLVEKFKDYFYYKDGYIIKKWFPGVDLFKVKIDSGIKKAIFNCVKNFQNLNVDKIEKFDWFKYPIQDAEYKALVKKYSKEPLVLSHNNLKRQNILVNKYGFIKLVDFEYVALNNKYVDPVSLYLFLGIPKEDIIDFFKLDPSVFDDFVFLMRVYNEAMYLNDYSKNNSKSLSPFDSKSLYSNKDFLELNRFIVQKNHNNFDNKLNISKIEKFYFVPLCVYEDEDRTIWKWINSKQLSSFNNHQIKVLAKAMRTLHDSDVEFPEYILSKKINWYLDHMEIKTLLEDLKGNKRINEIIKWIKQIKPDANCHNNLNFNNIFFNSSDNLYIIDWSVAYRNNRYLDIAFLFENTQMTPELESLFWKSYGMICPKDFYKYRIIVHFTAYLYNKLLNTDFNAAKVNTKRINEIFEKLNIKD.

This is an uncharacterized protein from Metamycoplasma hominis (strain ATCC 23114 / DSM 25592 / NBRC 14850 / NCTC 10111 / PG21) (Mycoplasma hominis).